A 315-amino-acid polypeptide reads, in one-letter code: MQCNDVQATEPDIKVSLTRVGVTNLKKLVKLKRKNKRDIVLLPTFEVFVDLPSSQKGIHMSRSPEVIEEVVENILLEKEIYGVEDLSVEIVMKLFEKHEYATRAEIMLYSDYMMEEKSPVTQKDSQEIGKIIARAYGVKDENGKIAVKKMVGAEVVGITACPCAQNMLKENAVANLKEKGFSSEEIEKILDSVTIATHNQRGIGTVMIEVPNGYAVGISKIIKIIKNSMSGEVYELLKRSDEAFVVEAAHKNPKFVEDCAREMIKRVVDVFDYLPEDTQVLVRQVNKESIHRHDAFAERNSTIRELRDELKTLTN.

Belongs to the GTP cyclohydrolase IV family. As to quaternary structure, homodimer. Fe(2+) serves as cofactor.

The catalysed reaction is GTP + H2O = 7,8-dihydroneopterin 2',3'-cyclic phosphate + formate + diphosphate + H(+). The protein operates within cofactor biosynthesis; 5,6,7,8-tetrahydromethanopterin biosynthesis. Its function is as follows. Converts GTP to 7,8-dihydro-D-neopterin 2',3'-cyclic phosphate, the first intermediate in the biosynthesis of coenzyme methanopterin. The protein is GTP cyclohydrolase MptA of Methanococcus maripaludis (strain C5 / ATCC BAA-1333).